A 247-amino-acid chain; its full sequence is Carboxy-S-adenosyl-L-methionine synthase (247 aa).

S-adenosyl-L-methionine contacts are provided by residues Tyr-39, 64-66 (GCS), 89-90 (DN), 117-118 (DI), Asn-132, and Arg-199.

Belongs to the class I-like SAM-binding methyltransferase superfamily. Cx-SAM synthase family. Homodimer.

It carries out the reaction prephenate + S-adenosyl-L-methionine = carboxy-S-adenosyl-L-methionine + 3-phenylpyruvate + H2O. In terms of biological role, catalyzes the conversion of S-adenosyl-L-methionine (SAM) to carboxy-S-adenosyl-L-methionine (Cx-SAM). This Escherichia coli O17:K52:H18 (strain UMN026 / ExPEC) protein is Carboxy-S-adenosyl-L-methionine synthase.